A 159-amino-acid chain; its full sequence is Eukaryotic translation initiation factor 5A-1 (159 aa).

Residues 1–12 (MSDEEHHFESKA) show a composition bias toward basic and acidic residues. The interval 1-23 (MSDEEHHFESKADAGASKTYPQQ) is disordered. K52 is modified (hypusine).

This sequence belongs to the eIF-5A family. Post-translationally, lys-52 undergoes hypusination, a unique post-translational modification that consists in the addition of a butylamino group from spermidine to lysine side chain, leading to the formation of the unusual amino acid hypusine. eIF-5As are the only known proteins to undergo this modification, which is essential for their function.

Functionally, translation factor that promotes translation elongation and termination, particularly upon ribosome stalling at specific amino acid sequence contexts. Binds between the exit (E) and peptidyl (P) site of the ribosome and promotes rescue of stalled ribosome: specifically required for efficient translation of polyproline-containing peptides as well as other motifs that stall the ribosome. Acts as a ribosome quality control (RQC) cofactor by joining the RQC complex to facilitate peptidyl transfer during CAT tailing step. The chain is Eukaryotic translation initiation factor 5A-1 (EIF-5A1) from Nicotiana plumbaginifolia (Leadwort-leaved tobacco).